The following is a 203-amino-acid chain: Putative 3-methyladenine DNA glycosylase (203 aa).

This sequence belongs to the DNA glycosylase MPG family.

In Staphylococcus saprophyticus subsp. saprophyticus (strain ATCC 15305 / DSM 20229 / NCIMB 8711 / NCTC 7292 / S-41), this protein is Putative 3-methyladenine DNA glycosylase.